The chain runs to 385 residues: 1-deoxy-D-xylulose 5-phosphate reductoisomerase (385 aa).

Positions 10, 11, 12, 13, and 124 each coordinate NADPH. Lys-125 lines the 1-deoxy-D-xylulose 5-phosphate pocket. Glu-126 is a binding site for NADPH. Asp-150 provides a ligand contact to Mn(2+). Positions 151, 152, 176, and 199 each coordinate 1-deoxy-D-xylulose 5-phosphate. Glu-152 serves as a coordination point for Mn(2+). Gly-205 is a binding site for NADPH. Positions 212, 217, 218, and 221 each coordinate 1-deoxy-D-xylulose 5-phosphate. Glu-221 is a binding site for Mn(2+).

The protein belongs to the DXR family. The cofactor is Mg(2+). Mn(2+) serves as cofactor.

The enzyme catalyses 2-C-methyl-D-erythritol 4-phosphate + NADP(+) = 1-deoxy-D-xylulose 5-phosphate + NADPH + H(+). Its pathway is isoprenoid biosynthesis; isopentenyl diphosphate biosynthesis via DXP pathway; isopentenyl diphosphate from 1-deoxy-D-xylulose 5-phosphate: step 1/6. Its function is as follows. Catalyzes the NADPH-dependent rearrangement and reduction of 1-deoxy-D-xylulose-5-phosphate (DXP) to 2-C-methyl-D-erythritol 4-phosphate (MEP). The protein is 1-deoxy-D-xylulose 5-phosphate reductoisomerase of Clostridium kluyveri (strain NBRC 12016).